A 325-amino-acid chain; its full sequence is Beta-ketoacyl-[acyl-carrier-protein] synthase III (325 aa).

Catalysis depends on residues C119 and H252. Positions 253–257 (QANIR) are ACP-binding. The active site involves N282.

Belongs to the thiolase-like superfamily. FabH family. In terms of assembly, homodimer.

The protein localises to the cytoplasm. The enzyme catalyses malonyl-[ACP] + acetyl-CoA + H(+) = 3-oxobutanoyl-[ACP] + CO2 + CoA. It participates in lipid metabolism; fatty acid biosynthesis. Catalyzes the condensation reaction of fatty acid synthesis by the addition to an acyl acceptor of two carbons from malonyl-ACP. Catalyzes the first condensation reaction which initiates fatty acid synthesis and may therefore play a role in governing the total rate of fatty acid production. Possesses both acetoacetyl-ACP synthase and acetyl transacylase activities. Its substrate specificity determines the biosynthesis of branched-chain and/or straight-chain of fatty acids. The polypeptide is Beta-ketoacyl-[acyl-carrier-protein] synthase III (Paracidovorax citrulli (strain AAC00-1) (Acidovorax citrulli)).